A 720-amino-acid polypeptide reads, in one-letter code: Zinc finger protein 408 (720 aa).

The tract at residues 201–350 (VQQEVASPGE…GPAGSSPKQG (150 aa)) is disordered. The span at 275-285 (LQSNSATQQDP) shows a compositional bias: polar residues. Low complexity predominate over residues 287 to 296 (GSGASFSSSA). Threonine 322 is modified (phosphothreonine). C2H2-type zinc fingers lie at residues 353–375 (YRCG…AFVH), 381–403 (FLCT…MLGH), 409–431 (FPCP…QVVH), 437–459 (FACD…RKTH), 468–490 (CPCP…MRLH), 496–518 (FLCP…LRLH), 524–546 (YRCP…LISH), 551–573 (HLCP…ERLH), 579–601 (FPCP…LKSH), and 607–629 (YRCP…QLSH).

Highest expression is observed in adult retina; abundantly expressed in the fetal eye. In the retina, it is detected in the outer nuclear layer, especially cone and rod photoreceptor cells, ganglion cell layer and both outer and inner plexiform layers (at protein level). Expressed in retinal blood vessels (at protein level).

The protein resides in the nucleus. May be involved in transcriptional regulation. The protein is Zinc finger protein 408 (ZNF408) of Homo sapiens (Human).